The sequence spans 158 residues: MNKEVFATKTAIILGDRDGIPGQAIEACIKTTGAHVAFSTTECFVUTSAGAMDLENQKRIKALADEFGAENIIVILGGAEAEASGLACETVTTGDPTFAGPLAGVQLGLSCYHVVEDAIKEAVDPAVYEEQIGMMEMVLDVDAIKAEMQQYREEPVEA.

The active site involves Sec46. A non-standard amino acid (selenocysteine) is located at residue Sec46.

The protein belongs to the GrdA family. As to quaternary structure, monomer. Component of the glycine, sarcosine and betaine reductase complexes, together with components B and C.

It catalyses the reaction acetyl phosphate + [thioredoxin]-disulfide + NH4(+) + H2O = [thioredoxin]-dithiol + glycine + phosphate + H(+). It carries out the reaction acetyl phosphate + methylamine + [thioredoxin]-disulfide + H2O = sarcosine + [thioredoxin]-dithiol + phosphate + H(+). The enzyme catalyses acetyl phosphate + trimethylamine + [thioredoxin]-disulfide + H2O = glycine betaine + [thioredoxin]-dithiol + phosphate + H(+). In the first step of glycine, betaine and sarcosine reductases, the substrate is bound to component PB via a Schiff base intermediate. Then the PB-activated substrate is nucleophilically attacked by the selenol anion of component PA to transform it to a carboxymethylated selenoether and the respective amine. By action of component PC, acetyl phosphate is formed, leaving component PA in its oxidized state. Finally component PA becomes reduced by the thioredoxin system to start a new catalytic cycle of reductive deamination. The polypeptide is Glycine/sarcosine/betaine reductase complex component A1 (grdA1) (Photobacterium profundum (strain SS9)).